The chain runs to 211 residues: Endonuclease III (211 aa).

Residues 108–127 enclose the HhH domain; that stretch reads RAALEALPGVGRKTANVVLN. Positions 187, 194, 197, and 203 each coordinate [4Fe-4S] cluster.

This sequence belongs to the Nth/MutY family. It depends on [4Fe-4S] cluster as a cofactor.

The enzyme catalyses 2'-deoxyribonucleotide-(2'-deoxyribose 5'-phosphate)-2'-deoxyribonucleotide-DNA = a 3'-end 2'-deoxyribonucleotide-(2,3-dehydro-2,3-deoxyribose 5'-phosphate)-DNA + a 5'-end 5'-phospho-2'-deoxyribonucleoside-DNA + H(+). DNA repair enzyme that has both DNA N-glycosylase activity and AP-lyase activity. The DNA N-glycosylase activity releases various damaged pyrimidines from DNA by cleaving the N-glycosidic bond, leaving an AP (apurinic/apyrimidinic) site. The AP-lyase activity cleaves the phosphodiester bond 3' to the AP site by a beta-elimination, leaving a 3'-terminal unsaturated sugar and a product with a terminal 5'-phosphate. The polypeptide is Endonuclease III (Escherichia coli O6:H1 (strain CFT073 / ATCC 700928 / UPEC)).